We begin with the raw amino-acid sequence, 253 residues long: Small ribosomal subunit protein uS2 (253 aa).

The protein belongs to the universal ribosomal protein uS2 family.

This is Small ribosomal subunit protein uS2 from Parvibaculum lavamentivorans (strain DS-1 / DSM 13023 / NCIMB 13966).